A 223-amino-acid polypeptide reads, in one-letter code: Endonuclease V (223 aa).

2 residues coordinate Mg(2+): aspartate 35 and aspartate 103.

Belongs to the endonuclease V family. The cofactor is Mg(2+).

The protein resides in the cytoplasm. It catalyses the reaction Endonucleolytic cleavage at apurinic or apyrimidinic sites to products with a 5'-phosphate.. Functionally, DNA repair enzyme involved in the repair of deaminated bases. Selectively cleaves double-stranded DNA at the second phosphodiester bond 3' to a deoxyinosine leaving behind the intact lesion on the nicked DNA. The chain is Endonuclease V from Cronobacter sakazakii (strain ATCC BAA-894) (Enterobacter sakazakii).